A 229-amino-acid polypeptide reads, in one-letter code: 2-C-methyl-D-erythritol 4-phosphate cytidylyltransferase (229 aa).

Belongs to the IspD/TarI cytidylyltransferase family. IspD subfamily.

It carries out the reaction 2-C-methyl-D-erythritol 4-phosphate + CTP + H(+) = 4-CDP-2-C-methyl-D-erythritol + diphosphate. It participates in isoprenoid biosynthesis; isopentenyl diphosphate biosynthesis via DXP pathway; isopentenyl diphosphate from 1-deoxy-D-xylulose 5-phosphate: step 2/6. Catalyzes the formation of 4-diphosphocytidyl-2-C-methyl-D-erythritol from CTP and 2-C-methyl-D-erythritol 4-phosphate (MEP). The sequence is that of 2-C-methyl-D-erythritol 4-phosphate cytidylyltransferase from Clostridium botulinum (strain Okra / Type B1).